A 245-amino-acid polypeptide reads, in one-letter code: NAD(P)H-quinone oxidoreductase subunit K (245 aa).

The [4Fe-4S] cluster site is built by cysteine 58, cysteine 59, cysteine 123, and cysteine 154. The tract at residues 210–245 (SDTRSAPPKELAEAIGMPIPPALLTEKAQKEEQTRG) is disordered. Residues 236–245 (KAQKEEQTRG) show a composition bias toward basic and acidic residues.

It belongs to the complex I 20 kDa subunit family. As to quaternary structure, NDH-1 can be composed of about 15 different subunits; different subcomplexes with different compositions have been identified which probably have different functions. Requires [4Fe-4S] cluster as cofactor.

Its subcellular location is the cellular thylakoid membrane. The catalysed reaction is a plastoquinone + NADH + (n+1) H(+)(in) = a plastoquinol + NAD(+) + n H(+)(out). The enzyme catalyses a plastoquinone + NADPH + (n+1) H(+)(in) = a plastoquinol + NADP(+) + n H(+)(out). NDH-1 shuttles electrons from an unknown electron donor, via FMN and iron-sulfur (Fe-S) centers, to quinones in the respiratory and/or the photosynthetic chain. The immediate electron acceptor for the enzyme in this species is believed to be plastoquinone. Couples the redox reaction to proton translocation, and thus conserves the redox energy in a proton gradient. Cyanobacterial NDH-1 also plays a role in inorganic carbon-concentration. The chain is NAD(P)H-quinone oxidoreductase subunit K from Nostoc punctiforme (strain ATCC 29133 / PCC 73102).